The sequence spans 346 residues: UPF0421 protein OB2406 (346 aa).

4 helical membrane passes run 16-36, 55-75, 102-122, and 128-148; these read IAVL…VFAV, LIRF…IALF, LLVA…NYVM, and LFTT…LLPP.

The protein belongs to the UPF0421 family.

It localises to the cell membrane. The protein is UPF0421 protein OB2406 of Oceanobacillus iheyensis (strain DSM 14371 / CIP 107618 / JCM 11309 / KCTC 3954 / HTE831).